A 5085-amino-acid polypeptide reads, in one-letter code: Protein piccolo (5085 aa).

Residues 1–20 are compositionally biased toward low complexity; that stretch reads MGNEASLEGEGLPEGLAAAA. Disordered stretches follow at residues 1 to 142 and 173 to 516; these read MGNE…DFKE and DLIS…TPAQ. The segment covering 92–101 has biased composition (pro residues); it reads PGKPPDPGRP. Basic and acidic residues-rich tracts occupy residues 110–121, 132–142, and 184–198; these read RTTDTFRSEQKL, KESKSRTDFKE, and ETTK…EQGK. A phosphoserine mark is found at Ser-211 and Ser-231. Residues 227–240 are compositionally biased toward polar residues; the sequence is QQDSSPKSVSSQQA. The segment covering 253–268 has biased composition (low complexity); the sequence is PSQQSPAQTPAQQASP. Polar residues-rich tracts occupy residues 275 to 285, 318 to 332, and 375 to 391; these read QPGSAKATVQQ, KTSS…SLAQ, and TPAQ…QQPG. The tract at residues 372–491 is 12 X 10 AA tandem approximate repeats of P-A-K-P-Q-P-Q-Q-P-X; the sequence is PTKTPAQQSG…LAKPSAQQPT (120 aa). Positions 392–408 are enriched in pro residues; sequence PTKPSPQQPIPAKPQPQ. Residues 409–423 are compositionally biased toward low complexity; that stretch reads QPVATKTQPQQSAPA. Positions 424–472 are enriched in pro residues; sequence KPQPQQPAPAKPQPQQPTPAKPQPQPPTPAKPQPQPPTATKPQPQPPTA. Residues 486 to 499 show a composition bias toward polar residues; the sequence is SAQQPTKSISQTVT. A C4-type zinc finger spans residues 523–547; sequence CPLCNTTELLLHIPEKANFNTCTEC. Disordered stretches follow at residues 586–880, 896–1012, 1069–1357, 1373–1604, and 1622–1815; these read AAIP…TVTG, LIST…ACPL, QLGD…PSDL, STLV…EELV, and TIAD…SDPE. Residues 596-613 are compositionally biased toward low complexity; it reads PKAATAPTATASKSPVPS. A compositionally biased stretch (basic and acidic residues) spans 618–654; the sequence is PKKEPPSKQDSPKALESKKPPEPKKPPEPKKPPEPKK. The segment covering 672 to 682 has biased composition (low complexity); the sequence is APQLPVAEALP. The segment covering 683–693 has biased composition (pro residues); it reads EPAPPKEPSGP. The span at 705–717 shows a compositional bias: basic and acidic residues; the sequence is VEPKQPKMTETRA. Over residues 718 to 767 the composition is skewed to polar residues; that stretch reads DIQSSSTTKPDILSSQVQSQAQVKTASPLKTDSAKPSQSFPPTGEKTTPL. A compositionally biased stretch (basic and acidic residues) spans 790 to 808; that stretch reads ESKDPKHIDPIQKKDEPKK. Residues Ser-857 and Ser-869 each carry the phosphoserine modification. Polar residues-rich tracts occupy residues 867–878, 896–906, and 917–936; these read PKSQPTTPQETV, LISTAGQQGPH, and QAPT…STGQ. Residue Thr-873 is modified to Phosphothreonine. Basic and acidic residues predominate over residues 990–1004; the sequence is EPEKAVPAHKPDKTT. Residues 1010-1033 form a C4-type zinc finger; the sequence is CPLCRTELNLGSQEPPNFNTCTEC. Over residues 1077-1092 the composition is skewed to pro residues; sequence PPAPSGPKASPMPAPA. A compositionally biased stretch (basic and acidic residues) spans 1110–1129; it reads KEAEGKTEAEKPVPEKETAS. The residue at position 1133 (Thr-1133) is a Phosphothreonine. Composition is skewed to basic and acidic residues over residues 1141–1150, 1157–1199, and 1274–1295; these read QKLEESEGKK, PEKK…KLPP, and SSKD…DKSD. Residues 1300–1318 show a composition bias toward polar residues; sequence QQPKSPQGLSDTGYSSDGI. Residues Ser-1304, Ser-1314, Ser-1315, Ser-1344, Ser-1346, Ser-1349, Ser-1350, and Ser-1353 each carry the phosphoserine modification. Over residues 1331 to 1345 the composition is skewed to basic and acidic residues; sequence SDEKDLLKGLKKDSF. Low complexity predominate over residues 1346–1355; sequence SQESSPSSPS. Positions 1378–1396 are enriched in basic and acidic residues; sequence EKAEKKTQPQKISPEKPQD. Polar residues predominate over residues 1397-1407; the sequence is QQKTQTASETL. The segment covering 1417–1456 has biased composition (basic and acidic residues); the sequence is KESQEKKVSPKKDSEQGFPSRKEHKEKPELVDDLSPRRAS. Ser-1451, Ser-1463, Ser-1464, Ser-1466, Ser-1469, Ser-1493, Ser-1496, Ser-1517, and Ser-1519 each carry phosphoserine. Residues 1511-1523 are compositionally biased toward acidic residues; sequence SADEDASGSEDEE. Thr-1564 bears the Phosphothreonine mark. A phosphoserine mark is found at Ser-1565, Ser-1575, and Ser-1587. Over residues 1578-1587 the composition is skewed to acidic residues; the sequence is DEDDETFDES. Basic and acidic residues predominate over residues 1588–1599; it reads PELKFRETKSQE. Polar residues predominate over residues 1622 to 1635; sequence TIADKYSSESSQKK. Residues 1640 to 1650 show a composition bias toward acidic residues; that stretch reads FDEEPELEMES. Position 1650 is a phosphoserine (Ser-1650). The residue at position 1652 (Thr-1652) is a Phosphothreonine. Residues Ser-1654 and Ser-1659 each carry the phosphoserine modification. A compositionally biased stretch (polar residues) spans 1662 to 1679; sequence EGSSSLHASSFTPGTSPT. A compositionally biased stretch (acidic residues) spans 1719-1732; that stretch reads DSSEEEELREEEEL. Phosphoserine is present on residues Ser-1720 and Ser-1721. The span at 1733–1746 shows a compositional bias: basic and acidic residues; it reads LKEQEKQRELEQQQ. Thr-1772 carries the phosphothreonine modification. A Phosphoserine modification is found at Ser-1778. Residues 1787–1802 are compositionally biased toward basic and acidic residues; sequence EELRQAAEMEELHRSS. Phosphoserine occurs at positions 1807, 1812, 1820, and 1841. Disordered regions lie at residues 2116 to 2139, 2275 to 2385, and 2456 to 2486; these read PSES…SSVC, ELTK…PTYP, and KPPI…TGLS. The segment covering 2121–2139 has biased composition (low complexity); sequence TSVPPSDTPSLTSSISSVC. The segment covering 2350–2384 has biased composition (pro residues); the sequence is QPPPPPPPPPPSPSTSSPPPTPPLPPATSPKPPTY. Ser-2511 is modified (phosphoserine). Thr-2702 is a glycosylation site (O-linked (GlcNAc) threonine). O-linked (GlcNAc) serine glycosylation occurs at Ser-2976. Residue Thr-3014 is modified to Phosphothreonine. Disordered stretches follow at residues 3350-3457 and 3503-3572; these read KEEK…PLSK and KTYK…LYSP. Ser-3374 carries the post-translational modification Phosphoserine. The segment covering 3377 to 3386 has biased composition (basic and acidic residues); that stretch reads DDPRNLKKIV. Position 3388 is a phosphoserine (Ser-3388). Residues Thr-3392 and Thr-3419 each carry the phosphothreonine modification. The segment covering 3419-3428 has biased composition (acidic residues); it reads TDDEDQDEWD. Over residues 3511 to 3523 the composition is skewed to polar residues; sequence GCQTETDSDTQSP. Ser-3522, Ser-3530, Ser-3561, Ser-3565, Ser-3571, Ser-3574, Ser-3577, Ser-3598, Ser-3624, Ser-3626, and Ser-3632 each carry phosphoserine. 2 disordered regions span residues 3602 to 3695 and 3774 to 3816; these read VLHP…ASRR and AEDR…FIPP. Composition is skewed to polar residues over residues 3647–3663 and 3679–3691; these read EGFT…SGTQ and STGT…TMGT. The residue at position 3781 (Ser-3781) is a Phosphoserine. Basic and acidic residues predominate over residues 3791–3803; sequence SRVESQHGVERPR. The span at 3805–3816 shows a compositional bias: polar residues; it reads APQTEFSQFIPP. Residues Ser-4034 and Ser-4150 each carry the phosphoserine modification. Disordered stretches follow at residues 4225–4248 and 4272–4291; these read ADKP…YGLD and VSFG…LPIS. The segment covering 4228-4248 has biased composition (low complexity); sequence PYSSGSRSRPSSRPSSVYGLD. The span at 4275–4291 shows a compositional bias: polar residues; it reads GHSSSSARTKPTSLPIS. A phosphoserine mark is found at Ser-4304, Ser-4308, Ser-4311, Ser-4340, and Ser-4376. The disordered stretch occupies residues 4335 to 4357; that stretch reads RDQFGSSHSLPEVQQHMREESRT. A PDZ domain is found at 4442 to 4536; the sequence is RVKITRDFKD…EAEICVRLDL (95 aa). Residues 4589–4638 form a disordered region; sequence VEKGSHAHSGPTSAGSSSVPSPGQPGSPSVSKKKHSSTKPTDGPKAASHP. The segment covering 4595 to 4618 has biased composition (low complexity); the sequence is AHSGPTSAGSSSVPSPGQPGSPSV. Position 4609 is a phosphoserine (Ser-4609). Residues 4639–4768 form the C2 1 domain; the sequence is ITGEIQLQIN…SHLDNTPRWY (130 aa). Ca(2+) contacts are provided by Asp-4668 and Asp-4674. Ser-4723 carries the post-translational modification Phosphoserine. Positions 4738, 4740, 4743, and 4746 each coordinate Ca(2+). 2 disordered regions span residues 4775–4851 and 4874–4908; these read ESID…SVAQ and QPTK…SEGS. Composition is skewed to low complexity over residues 4783-4795 and 4822-4832; these read HSSQ…PKPS and SSPGSSKSSSE. Residues 4840–4851 are compositionally biased toward polar residues; that stretch reads PSRSQSKTSVAQ. Residues 4886 to 4908 show a composition bias toward low complexity; it reads SSVSTGSSGSSVGSGYSVDSEGS. Residues 4950–5075 form the C2 2 domain; the sequence is VMGEIKLALK…DLRKRIVNWH (126 aa).

In terms of assembly, interacts with BSN, ERC2/CAST1, RIMS1 and UNC13A. Interacts (via C-terminus) with TRIO (via N-terminus). Interacts with CTBP1. Interacts with SIAH1; this interaction negatively regulates SIAH1 E3 ligase activity. Directly interacts with GIT1 and GIT2. Requires Ca(2+) as cofactor. Expressed in brain (at protein level).

The protein localises to the presynaptic active zone. Functionally, scaffold protein of the presynaptic cytomatrix at the active zone (CAZ) which is the place in the synapse where neurotransmitter is released. After synthesis, participates in the formation of Golgi-derived membranous organelles termed Piccolo-Bassoon transport vesicles (PTVs) that are transported along axons to sites of nascent synaptic contacts. At the presynaptic active zone, regulates the spatial organization of synaptic vesicle cluster, the protein complexes that execute membrane fusion and compensatory endocytosis. Organizes as well the readily releasable pool of synaptic vesicles and safeguards a fraction of them to be not immediately available for action potential-induced release. Also functions in processes other than assembly such as the regulation of specific presynaptic protein ubiquitination by interacting with SIAH1 or the regulation of presynaptic autophagy. Also mediates synapse to nucleus communication leading to reconfiguration of gene expression by associating with the transcriptional corepressor CTBP1 and by subsequently reducing the size of its pool available for nuclear import. The chain is Protein piccolo (Pclo) from Rattus norvegicus (Rat).